The following is a 366-amino-acid chain: tRNA-specific 2-thiouridylase MnmA (366 aa).

Residues 12-19 and M38 each bind ATP; that span reads GMSGGVDS. The tract at residues 98-100 is interaction with target base in tRNA; the sequence is NPD. C103 acts as the Nucleophile in catalysis. Residues C103 and C200 are joined by a disulfide bond. G128 serves as a coordination point for ATP. Positions 150–152 are interaction with tRNA; it reads KDQ. The active-site Cysteine persulfide intermediate is C200. The tract at residues 312 to 313 is interaction with tRNA; it reads RY.

This sequence belongs to the MnmA/TRMU family.

The protein localises to the cytoplasm. The enzyme catalyses S-sulfanyl-L-cysteinyl-[protein] + uridine(34) in tRNA + AH2 + ATP = 2-thiouridine(34) in tRNA + L-cysteinyl-[protein] + A + AMP + diphosphate + H(+). Catalyzes the 2-thiolation of uridine at the wobble position (U34) of tRNA, leading to the formation of s(2)U34. The chain is tRNA-specific 2-thiouridylase MnmA from Pseudoalteromonas translucida (strain TAC 125).